The sequence spans 142 residues: ATP synthase epsilon chain (142 aa).

This sequence belongs to the ATPase epsilon chain family. F-type ATPases have 2 components, CF(1) - the catalytic core - and CF(0) - the membrane proton channel. CF(1) has five subunits: alpha(3), beta(3), gamma(1), delta(1), epsilon(1). CF(0) has three main subunits: a, b and c.

Its subcellular location is the cell inner membrane. In terms of biological role, produces ATP from ADP in the presence of a proton gradient across the membrane. In Mannheimia succiniciproducens (strain KCTC 0769BP / MBEL55E), this protein is ATP synthase epsilon chain.